Consider the following 122-residue polypeptide: MSLTNEQLIEAIASKSVSEIVELIAAMEEKFGVSAAVAAAAPAAGGAAAAEEKTEFNVVLTEAGANKVAVIKAVRGATGLGLKEAKDLVESAPANLKEGISKGEAEELKKALEEAGAKVEIK.

Belongs to the bacterial ribosomal protein bL12 family. Homodimer. Part of the ribosomal stalk of the 50S ribosomal subunit. Forms a multimeric L10(L12)X complex, where L10 forms an elongated spine to which 2 to 4 L12 dimers bind in a sequential fashion. Binds GTP-bound translation factors.

In terms of biological role, forms part of the ribosomal stalk which helps the ribosome interact with GTP-bound translation factors. Is thus essential for accurate translation. This chain is Large ribosomal subunit protein bL12, found in Actinobacillus succinogenes (strain ATCC 55618 / DSM 22257 / CCUG 43843 / 130Z).